The sequence spans 142 residues: MVLSAADKTNVKGIFAKIAGHAEEYGAEALDRMFTTYPQTKTYFPHFDVSHGSAQIKGHGKKVAAALVEAANHIDDIAGTLSKLSDLHAQKLRVDPVNFKLLGQCFLVVVAIHHPAALTPEVHASLDKFLCAVGTVLTAKYR.

Residues 2–142 (VLSAADKTNV…VGTVLTAKYR (141 aa)) enclose the Globin domain. Residue His-59 participates in O2 binding. Position 88 (His-88) interacts with heme b.

Belongs to the globin family. In terms of assembly, heterotetramer of two alpha chains and two beta chains. Red blood cells.

Involved in oxygen transport from the lung to the various peripheral tissues. The chain is Hemoglobin subunit alpha-A (HBAA) from Coturnix japonica (Japanese quail).